The sequence spans 318 residues: Putative S-adenosyl-L-methionine-dependent methyltransferase BCG_0781c (318 aa).

S-adenosyl-L-methionine contacts are provided by residues aspartate 135 and 164–165 (DL).

This sequence belongs to the UPF0677 family.

Exhibits S-adenosyl-L-methionine-dependent methyltransferase activity. In Mycobacterium bovis (strain BCG / Pasteur 1173P2), this protein is Putative S-adenosyl-L-methionine-dependent methyltransferase BCG_0781c.